The following is a 294-amino-acid chain: Putative deoxyribonuclease TATDN3 (294 aa).

6 residues coordinate Zn(2+): His-9, His-11, Glu-104, His-144, His-167, and Asp-215.

It belongs to the metallo-dependent hydrolases superfamily. TatD-type hydrolase family. The cofactor is Mn(2+). Requires Ca(2+) as cofactor. Mg(2+) serves as cofactor. Zn(2+) is required as a cofactor.

It localises to the nucleus. The 3'-exonuclease activity is sensitive to the metal ion present in the active site, whereas the AP endodeoxyribonuclease activity is observed in a variety of divalent metal cofactors. 3'-exoxonuclease activity is suppressed in the presence of Ca(2+), Zn(2+) and Ni(2+). Exhibits 3'-exonuclease activities and apurinic/apyrimidinic (AP) endonuclease (in vitro). Show preferential AP endonuclease activity on double-stranded DNA substrates and 3'- exonuclease activity on single-stranded DNA. The chain is Putative deoxyribonuclease TATDN3 (Tatdn3) from Mus musculus (Mouse).